The sequence spans 112 residues: Gastrula zinc finger protein XlCGF9.1 (112 aa).

4 consecutive C2H2-type zinc fingers follow at residues 6–28 (FICS…MKIH), 34–56 (FCCP…ERTH), 62–84 (FTCP…RIIH), and 90–112 (YSCP…FKIH).

The protein belongs to the krueppel C2H2-type zinc-finger protein family.

The protein resides in the nucleus. In terms of biological role, may be involved in transcriptional regulation. The chain is Gastrula zinc finger protein XlCGF9.1 from Xenopus laevis (African clawed frog).